A 398-amino-acid polypeptide reads, in one-letter code: 8-amino-7-oxononanoate synthase (398 aa).

Arg-26 lines the substrate pocket. Gly-113–Phe-114 provides a ligand contact to pyridoxal 5'-phosphate. Position 138 (His-138) interacts with substrate. Positions 181, 209, and 238 each coordinate pyridoxal 5'-phosphate. N6-(pyridoxal phosphate)lysine is present on Lys-241. Position 355 (Thr-355) interacts with substrate.

This sequence belongs to the class-II pyridoxal-phosphate-dependent aminotransferase family. BioF subfamily. Homodimer. Pyridoxal 5'-phosphate serves as cofactor.

It carries out the reaction 6-carboxyhexanoyl-[ACP] + L-alanine + H(+) = (8S)-8-amino-7-oxononanoate + holo-[ACP] + CO2. Its pathway is cofactor biosynthesis; biotin biosynthesis. In terms of biological role, catalyzes the decarboxylative condensation of pimeloyl-[acyl-carrier protein] and L-alanine to produce 8-amino-7-oxononanoate (AON), [acyl-carrier protein], and carbon dioxide. This is 8-amino-7-oxononanoate synthase from Aeromonas salmonicida (strain A449).